The primary structure comprises 110 residues: uncharacterized protein (110 aa).

The segment at 85 to 110 is disordered; the sequence is ARKAERPSQGGKDYNGTAKSAQSTTV. A compositionally biased stretch (polar residues) spans 101-110; that stretch reads TAKSAQSTTV.

This is an uncharacterized protein from Saccharomyces cerevisiae (strain ATCC 204508 / S288c) (Baker's yeast).